Reading from the N-terminus, the 90-residue chain is Delta-aiptatoxin-Adi1a (90 aa).

The first 21 residues, 1–21 (MKTAMLIAVLGFCAALCFVES), serve as a signal peptide directing secretion. Residues 22 to 44 (SHEEEREAAVYLTDLVSKAESAI) constitute a propeptide that is removed on maturation. Disulfide bonds link C50–C86, C52–C77, and C70–C87.

It belongs to the sea anemone sodium channel inhibitory toxin family.

It is found in the secreted. Its subcellular location is the nematocyst. In terms of biological role, cardioactive peptide that acts on voltage-gated sodium channels (hNav1.5/SCN5A) and voltage-gated potassium channels (Kv). The activity on sodium channels consists of inhibition on sodium current inactivation with no significant effect on current activation. This effect may be caused by direct interaction of the toxin with sodium channel site-3. The activity on potassium channels consists of a significant increase of the amplitude of the transient component of the potassium current, shifting the current threshold to more negative membrane potentials. These effects are concentration-dependent and reversible and may be due to a direct interaction between the toxin and the voltage-sensing domain of the channel. Physiologically, this toxin increases the amplitude of cardiomyocyte contraction and slows the late phase of the twitch relaxation velocity with no induction of spontaneous twitching. It increases action potential duration of cardiomyocytes with no effect on its threshold and on the cell resting potential. On insects, it shows neurotoxic activity to the blowfly larvae S.falculaty, causing an immediate spasm that progressed to body contraction and paralysis. The polypeptide is Delta-aiptatoxin-Adi1a (Exaiptasia diaphana (Tropical sea anemone)).